The following is a 2192-amino-acid chain: Non-reducing polyketide synthase 1 (2192 aa).

The interval 5-243 (LLLGDQTADQ…VSIPIYAPYH (239 aa)) is N-terminal acylcarrier protein transacylase domain (SAT). The 433-residue stretch at 374 to 806 (NDKIAIVGMS…GGNTSLLLED (433 aa)) folds into the Ketosynthase family 3 (KS3) domain. Catalysis depends on for beta-ketoacyl synthase activity residues Cys546, His681, and His724. The segment at 905–1218 (FCFTGQGSQY…ANSMCALFLA (314 aa)) is malonyl-CoA:ACP transacylase (MAT) domain. Ser993 acts as the For acyl/malonyl transferase activity in catalysis. The tract at residues 1293-1610 (SCQKIIDEEF…RKVLNTFLPP (318 aa)) is product template (PT) domain. Positions 1295–1430 (QKIIDEEFSA…CTVKFEDINT (136 aa)) are N-terminal hotdog fold. The 311-residue stretch at 1295-1605 (QKIIDEEFSA…FQKIPRKVLN (311 aa)) folds into the PKS/mFAS DH domain. His1327 acts as the Proton acceptor; for dehydratase activity in catalysis. The interval 1458–1605 (AHVIGRGLAY…FQKIPRKVLN (148 aa)) is C-terminal hotdog fold. Asp1518 (proton donor; for dehydratase activity) is an active-site residue. A disordered region spans residues 1639–1668 (TQAQPAKAVPKQVTVAAPTPKAAPKKADLK). One can recognise a Carrier 1 domain in the interval 1670–1747 (PAGPTIITRV…EMKKFFSQYD (78 aa)). At Ser1707 the chain carries O-(pantetheine 4'-phosphoryl)serine. The segment at 1748 to 1788 (GEVGTPEQDDSDSDSETSGDASTPMSEVGTPMTIPSSAVSE) is disordered. The span at 1754–1764 (EQDDSDSDSET) shows a compositional bias: acidic residues. The Carrier 2 domain occupies 1798–1875 (APASGEVSIA…DVENALDMRP (78 aa)). O-(pantetheine 4'-phosphoryl)serine is present on Ser1835. Residues 1913–2164 (SKYPAATSVL…SMMKPPHVSI (252 aa)) are thioesterase (TE) domain.

Its function is as follows. Non-reducing polyketide synthase; part of the gene cluster that mediates the biosynthesis of elsinochromes, pigments consisting of at least four interconvertible tautomers (A, B, C and D) that have a core phenolic quinone to which various side chains are attached and which play an important role in fungal pathogenesis. The non-reducing polyketide synthase PKS1 was proposed to iteratively catalyze decarboxylation between acetyl-CoA and malonyl-CoA subunits for polyketide chain elongation. The released polyketide undergoes cyclization to form an aromatic ring, and proceeds via serial modification steps to produce the heptaketide back- bone of elsinochrome. As elsinochrome has a symmetrical structure, two identical heptaketides are fused to form a core 1,2-dihydrobenzo-perylene ring structure, which can then be successively modified to produce the various derivatives of elsinochrome. Some of these reactions may be cooperatively carried out, at least in part, by the products of RDT1, OXR1 and PKS1. PRF1, embedded within the elsinochrome cluster possibly functions to stabilize some of the biosynthetic enzymes required for elsinochrome production. As prefoldin is a hexamer containing 2 a and 4 b subunits, additional prefoldin subunits, whose coding genes may not immediately link to the elsinochrome biosynthetic gene cluster, are required to fulfill the chaperone function. In addition, no methyltransferase-coding gene exists within the biosynthetic gene cluster, even though elsinochrome has four methyl groups at positions C3, C7, C8 and C12. Apparently, the identified gene cluster does not contain the entire entourage of genes responsible for elsinochrome biosynthesis. Once elsinochrome is synthesized, it must be exported outside the fungal cells, which is probably accomplished by the ECT1 transporter, to avoid toxicity. This chain is Non-reducing polyketide synthase 1, found in Elsinoe fawcettii (Citrus scab fungus).